Reading from the N-terminus, the 132-residue chain is Fatty acid-binding protein, liver (132 aa).

Val-1 is modified (N-acetylvaline). Residue Tyr-19 is modified to Phosphotyrosine; by Tyr-kinases.

Belongs to the calycin superfamily. Fatty-acid binding protein (FABP) family.

It localises to the cytoplasm. In terms of biological role, FABPs are thought to play a role in the intracellular transport of long-chain fatty acids and their acyl-CoA esters. The sequence is that of Fatty acid-binding protein, liver from Ginglymostoma cirratum (Nurse shark).